Consider the following 574-residue polypeptide: Enolase 4 (574 aa).

Basic and acidic residues predominate over residues 165–175 (EKERRQMEREA). The interval 165 to 221 (EKERRQMEREASPMPLQPEPSPVTSPAPGKKKGSGKGKKAAVVEKPIPPEETPEAVV) is disordered. The segment covering 179 to 189 (PLQPEPSPVTS) has biased composition (pro residues). Residues 193-203 (GKKKGSGKGKK) are compositionally biased toward basic residues. Substrate is bound at residue Glu-287. Lys-467 (proton acceptor) is an active-site residue. Lys-518 is a binding site for substrate.

This sequence belongs to the enolase family.

The enzyme catalyses (2R)-2-phosphoglycerate = phosphoenolpyruvate + H2O. It functions in the pathway carbohydrate degradation; glycolysis; pyruvate from D-glyceraldehyde 3-phosphate: step 4/5. The protein is Enolase 4 (eno4) of Xenopus tropicalis (Western clawed frog).